A 491-amino-acid chain; its full sequence is Zinc finger protein 655 (491 aa).

Residues 1–52 (MEEIPAQEAAGSPRVQFQSLETQSECLSPEPQFVQDTDMEQGLTGDGETREE) form a disordered region. A compositionally biased stretch (polar residues) spans 15–26 (VQFQSLETQSEC). Glutamine 60 carries the post-translational modification Phosphoserine. Residues lysine 77, lysine 190, and lysine 201 each participate in a glycyl lysine isopeptide (Lys-Gly) (interchain with G-Cter in SUMO2) cross-link. 6 C2H2-type zinc fingers span residues 212-234 (YKCD…QRIH), 240-262 (YKCK…KRIH), 303-325 (YKCS…QKIH), 330-353 (CKCT…RVHH), 380-402 (YTCS…QRIH), and 408-430 (HECN…HKMH).

The protein belongs to the krueppel C2H2-type zinc-finger protein family. Interacts with VAV1 and CDK4. Interacts with INTS13; promoting association with the integrator complex.

The protein localises to the nucleus. Probable transcription factor. This is Zinc finger protein 655 from Homo sapiens (Human).